Consider the following 204-residue polypeptide: High frequency lysogenization protein HflD homolog (204 aa).

The protein belongs to the HflD family.

Its subcellular location is the cytoplasm. The protein resides in the cell inner membrane. This chain is High frequency lysogenization protein HflD homolog, found in Xanthomonas campestris pv. campestris (strain ATCC 33913 / DSM 3586 / NCPPB 528 / LMG 568 / P 25).